A 221-amino-acid chain; its full sequence is MASSTSLPAPGSRPKKPLGKMADWFRQTLLKKPKKRPNSPESTSSDASQPTSQDSPLPPSLSSVTSPSLPPTHASDSGSSRWSKDYDVCVCHSEEDLVAAQDLVSYLEGSTASLRCFLQLRDATPGGAIVSELCQALSSSHCRVLLITPGFLQDPWCKYQMLQALTEAPGAEGCTIPLLSGLSRAAYPPELRFMYYVDGRGPDGGFRQVKEAVMRYLQTLS.

Residues M1–W82 are disordered. Positions S48–P67 are enriched in low complexity. Residues K84–V213 form the TIR domain. 2 disulfide bridges follow: C89–C134 and C142–C174.

Homodimer. Also forms heterodimers with MYD88. May interact with PIK3AP1. Interacts with TLR4 and IRAK2 via their respective TIR domains. Interacts with BMX and TBK1. Interacts with EIF2AK2. Does not interact with IRAK1, nor TLR9. Interacts with TLR2. Interacts with RAGE/AGER. In terms of assembly, (Microbial infection) In case of infection, interacts with B.melitensis protein TcpB (AC Q8YF53); TcpB abolishes the TLR4-TIRAP interaction and downstream signaling. Phosphorylated by IRAK1 and IRAK4. Also phosphorylated by BTK. In terms of processing, polyubiquitinated. Polyubiquitination follows phosphorylation by BTK and leads to TIRAP degradation. Highly expressed in liver, kidney, spleen, skeletal muscle and heart. Also detected in peripheral blood leukocytes, lung, placenta, small intestine, thymus, colon and brain.

Its subcellular location is the cytoplasm. It is found in the cell membrane. The protein resides in the membrane. In terms of biological role, adapter involved in TLR2, TLR4 and RAGE signaling pathways in the innate immune response. Acts via IRAK2 and TRAF-6, leading to the activation of NF-kappa-B, MAPK1, MAPK3 and JNK, and resulting in cytokine secretion and the inflammatory response. Positively regulates the production of TNF-alpha (TNF) and interleukin-6 (IL6). The polypeptide is Toll/interleukin-1 receptor domain-containing adapter protein (TIRAP) (Homo sapiens (Human)).